The sequence spans 33 residues: Phospholipase A2 homolog BmarPLA2 (33 aa).

It belongs to the phospholipase A2 family. Group II subfamily. K49 sub-subfamily. Homodimer; non-covalently linked. Expressed by the venom gland.

Its subcellular location is the secreted. Its function is as follows. Snake phospholipase A2 homolog that lacks enzymatic activity. May display myotoxin activity. In isolated heart decreases cardiac frequency. Also decreases mean arterial pressure. Does not show antimicrobial activity. Does not change renal parameters (such as perfusion pressure, renal vascular resistance, urinary flow, glomerular filtration rate and sodium tubular transport). In Bothrops marajoensis (Marajo lancehead), this protein is Phospholipase A2 homolog BmarPLA2.